The primary structure comprises 397 residues: CCA-adding enzyme (397 aa).

Residues glycine 32 and arginine 35 each coordinate ATP. The CTP site is built by glycine 32 and arginine 35. Aspartate 45 and aspartate 47 together coordinate Mg(2+). The ATP site is built by arginine 116, aspartate 159, arginine 162, arginine 165, and arginine 168. CTP is bound by residues arginine 116, aspartate 159, arginine 162, arginine 165, and arginine 168.

It belongs to the tRNA nucleotidyltransferase/poly(A) polymerase family. Bacterial CCA-adding enzyme type 3 subfamily. As to quaternary structure, homodimer. The cofactor is Mg(2+).

The enzyme catalyses a tRNA precursor + 2 CTP + ATP = a tRNA with a 3' CCA end + 3 diphosphate. The catalysed reaction is a tRNA with a 3' CCA end + 2 CTP + ATP = a tRNA with a 3' CCACCA end + 3 diphosphate. Its function is as follows. Catalyzes the addition and repair of the essential 3'-terminal CCA sequence in tRNAs without using a nucleic acid template. Adds these three nucleotides in the order of C, C, and A to the tRNA nucleotide-73, using CTP and ATP as substrates and producing inorganic pyrophosphate. tRNA 3'-terminal CCA addition is required both for tRNA processing and repair. Also involved in tRNA surveillance by mediating tandem CCA addition to generate a CCACCA at the 3' terminus of unstable tRNAs. While stable tRNAs receive only 3'-terminal CCA, unstable tRNAs are marked with CCACCA and rapidly degraded. The protein is CCA-adding enzyme of Latilactobacillus sakei subsp. sakei (strain 23K) (Lactobacillus sakei subsp. sakei).